A 157-amino-acid polypeptide reads, in one-letter code: Ubiquitin-like protein 4A (157 aa).

Residues 1–76 (MQLTVKALQG…LNLVVKPLEK (76 aa)) enclose the Ubiquitin-like domain. A Glycyl lysine isopeptide (Lys-Gly) (interchain with G-Cter in ubiquitin) cross-link involves residue Lys48. At Ser90 the chain carries Phosphoserine. The tract at residues 96-138 (WQLISKVLARHFSVADASRVLEQLQRDYDRSLSRLTLDDIERL) is required and sufficient for interaction with BAG6.

Component of the BAG6/BAT3 complex, at least composed of BAG6, UBL4A and GET4/TRC35. Interacts with BAG6; the interaction is direct and required for UBL4A protein stability. Interacts with USP13; may be indirect via BAG6. Polyubiquitinated. Ubiquitination by AMFR and deubiquitination by USP13 may regulate the interaction between the BAG6/BAT3 complex and SGTA and therefore may regulate client proteins fate.

The protein localises to the cytoplasm. It is found in the cytosol. It localises to the nucleus. As part of a cytosolic protein quality control complex, the BAG6/BAT3 complex, maintains misfolded and hydrophobic patches-containing proteins in a soluble state and participates in their proper delivery to the endoplasmic reticulum or alternatively can promote their sorting to the proteasome where they undergo degradation. The BAG6/BAT3 complex is involved in the post-translational delivery of tail-anchored/type II transmembrane proteins to the endoplasmic reticulum membrane. Recruited to ribosomes, it interacts with the transmembrane region of newly synthesized tail-anchored proteins and together with SGTA and ASNA1 mediates their delivery to the endoplasmic reticulum. Client proteins that cannot be properly delivered to the endoplasmic reticulum are ubiquitinated and sorted to the proteasome. Similarly, the BAG6/BAT3 complex also functions as a sorting platform for proteins of the secretory pathway that are mislocalized to the cytosol either delivering them to the proteasome for degradation or to the endoplasmic reticulum. The BAG6/BAT3 complex also plays a role in the endoplasmic reticulum-associated degradation (ERAD), a quality control mechanism that eliminates unwanted proteins of the endoplasmic reticulum through their retrotranslocation to the cytosol and their targeting to the proteasome. It maintains these retrotranslocated proteins in an unfolded yet soluble state condition in the cytosol to ensure their proper delivery to the proteasome. In Mus musculus (Mouse), this protein is Ubiquitin-like protein 4A.